We begin with the raw amino-acid sequence, 165 residues long: Nucleotide-binding protein PMM0481 (165 aa).

It belongs to the YajQ family.

Functionally, nucleotide-binding protein. In Prochlorococcus marinus subsp. pastoris (strain CCMP1986 / NIES-2087 / MED4), this protein is Nucleotide-binding protein PMM0481.